Consider the following 386-residue polypeptide: bHLH transcription factor RHL1 (386 aa).

The tract at residues F119–S186 is disordered. Over residues Q127–Q137 the composition is skewed to low complexity. Polar residues predominate over residues G138 to T151. The segment at Q180 to R193 is basic motif; degenerate. One can recognise a bHLH domain in the interval Q180 to L229. The tract at residues E194–L229 is helix-loop-helix motif.

In terms of tissue distribution, expressed in root epidermal cells.

It localises to the nucleus. In terms of biological role, transcription factor that regulates the development of root hairs. This chain is bHLH transcription factor RHL1, found in Lotus japonicus (Lotus corniculatus var. japonicus).